The following is a 100-amino-acid chain: Osteocalcin (100 aa).

Positions 1–23 are cleaved as a signal peptide; that stretch reads MRTPMLLALLALATLCLAGRADA. Residues 24 to 51 constitute a propeptide that is removed on maturation; that stretch reads KPGDAESGKGAAFVSKQEGSEVVKRLRR. Residues 52–98 form the Gla domain; sequence YLDHWLGAPAPYPDPLEPKREVCELNPDCDELADHIGFQEAYRRFYG. 4-hydroxyproline is present on Pro60. Positions 68, 72, 75, and 81 each coordinate Ca(2+). 3 positions are modified to 4-carboxyglutamate: Glu68, Glu72, and Glu75. Cysteines 74 and 80 form a disulfide.

The protein belongs to the osteocalcin/matrix Gla protein family. Gamma-carboxyglutamate residues are formed by vitamin K dependent carboxylation by GGCX. These residues are essential for the binding of calcium. Decarboxylation promotes the hormone activity.

The protein localises to the secreted. In terms of biological role, the carboxylated form is one of the main organic components of the bone matrix, which constitutes 1-2% of the total bone protein. It acts as a negative regulator of bone formation and is required to limit bone formation without impairing bone resorption or mineralization. The carboxylated form binds strongly to apatite and calcium. The uncarboxylated form acts as a hormone secreted by osteoblasts, which regulates different cellular processes, such as energy metabolism, male fertility and brain development. Regulates of energy metabolism by acting as a hormone favoring pancreatic beta-cell proliferation, insulin secretion and sensitivity and energy expenditure. Uncarboxylated osteocalcin hormone also promotes testosterone production in the testes: acts as a ligand for G protein-coupled receptor GPRC6A at the surface of Leydig cells, initiating a signaling response that promotes the expression of enzymes required for testosterone synthesis in a CREB-dependent manner. Also acts as a regulator of brain development: osteocalcin hormone crosses the blood-brain barrier and acts as a ligand for GPR158 on neurons, initiating a signaling response that prevents neuronal apoptosis in the hippocampus, favors the synthesis of all monoamine neurotransmitters and inhibits that of gamma-aminobutyric acid (GABA). Osteocalcin also crosses the placenta during pregnancy and maternal osteocalcin is required for fetal brain development. In Bos taurus (Bovine), this protein is Osteocalcin (BGLAP).